A 1738-amino-acid chain; its full sequence is Sodium leak channel NALCN (1738 aa).

Residues 1–36 (MLKRKQSSRVEAQPVTDFGPDESLSDNADILWINKP) are Cytoplasmic-facing. Residues 37-57 (WVHSLLRICAIISVIPVCMNT) traverse the membrane as a helical segment. The Extracellular portion of the chain corresponds to 58–65 (PMTFEHYP). A helical transmembrane segment spans residues 66 to 90 (PLQYVTFTLDTLLMFLYTAEMIAKM). Residues 91–106 (HIRGIVKGDSSYVKDR) lie on the Cytoplasmic side of the membrane. A helical membrane pass occupies residues 107 to 129 (WCVFDGFMVFCLWVSLVLQVFEI). Over 130–137 (ADIVDQMS) the chain is Extracellular. A helical; Voltage-sensor transmembrane segment spans residues 138-158 (PWGMLRIPRPLIMIRAFRIYF). The Cytoplasmic segment spans residues 159 to 173 (RFELPRTRITNILKR). A helical membrane pass occupies residues 174 to 199 (SGEQIWSVSIFLLFFLLLYGILGVQM). At 200–269 (FGTFTYHCVV…YSGFNEIGTS (70 aa)) the chain is on the extracellular side. Cystine bridges form between Cys207–Cys239 and Cys229–Cys245. N-linked (GlcNAc...) asparagine glycosylation is found at Asn210 and Asn216. Positions 270–289 (IFTVYEASSQEGWVFLMYRA) form an intramembrane region, pore-forming. Over 290–294 (IDSFP) the chain is Extracellular. A helical membrane pass occupies residues 295 to 322 (RWRSYFYFITLIFFLAWLVKNVFIAVII). The Cytoplasmic portion of the chain corresponds to 323 to 382 (ETFAEIRVQFQQMWGTRSSTTSTATTQMFHEDAAGGWQLVAVDVNKPQGRAPACLQKMMR). A helical transmembrane segment spans residues 383–403 (SSVFHMFILSMVTVDVIVAAS). Residues 404–416 (NYYKGENFRRQYD) are Extracellular-facing. A helical membrane pass occupies residues 417–439 (EFYLAEVAFTVLFDLEALLKIWC). The Cytoplasmic segment spans residues 440 to 447 (LGFTGYIS). Residues 448 to 468 (SSLHKFELLLVIGTTLHVYPD) traverse the membrane as a helical segment. Residues 469–472 (LYHS) lie on the Extracellular side of the membrane. Residues 473–492 (QFTYFQVLRVVRLIKISPAL) form a helical; Voltage-sensor membrane-spanning segment. At 493-502 (EDFVYKIFGP) the chain is on the cytoplasmic side. Residues 503-530 (GKKLGSLVVFTASLLIVMSAISLQMFCF) form a helical membrane-spanning segment. The Extracellular portion of the chain corresponds to 531 to 543 (VEELDRFTTFPRA). Positions 544–563 (FMSMFQILTQEGWVDVMDQT) form an intramembrane region, pore-forming. Residues 564–569 (LNAVGH) lie on the Extracellular side of the membrane. Residues 570-599 (MWAPLVAIYFILYHLFATLILLSLFVAVIL) traverse the membrane as a helical segment. Topologically, residues 600–886 (DNLELDEDLK…QLYDLLGLVT (287 aa)) are cytoplasmic. Positions 762 to 789 (QERRSLRHGSNSQRISRGKSLETLTQDH) are disordered. Residues 795–830 (YRNAQREDSEIKMIQEKKEQAEMKRKVQEEELRENH) adopt a coiled-coil conformation. The chain crosses the membrane as a helical span at residues 887–906 (YLDWVMITVTICSCISMMFE). At 907-915 (SPFRRVMHA) the chain is on the extracellular side. A helical membrane pass occupies residues 916-939 (PTLQIAEYVFVIFMSIELNLKIMA). At 940-947 (DGLFFTPT) the chain is on the cytoplasmic side. A helical membrane pass occupies residues 948 to 972 (AVIRDFGGVMDIFIYLVSLIFLCWM). Residues 973–980 (PQNVPAES) lie on the Extracellular side of the membrane. Residues 981–1003 (GAQLLMVLRCLRPLRIFKLVPQM) traverse the membrane as a helical; Voltage-sensor segment. The Cytoplasmic portion of the chain corresponds to 1004-1015 (RKVVRELFSGFK). The helical transmembrane segment at 1016 to 1039 (EIFLVSILLLTLMLVFASFGVQLF) threads the bilayer. Residues 1040 to 1104 (AGKLAKCNDP…NFNFDNVGNA (65 aa)) lie on the Extracellular side of the membrane. Cys1046 and Cys1057 are oxidised to a cystine. N-linked (GlcNAc...) asparagine glycosylation occurs at Asn1064. Residues 1105 to 1124 (MLALFEVLSLKGWVEVRDVI) constitute an intramembrane region (pore-forming). Over 1125–1129 (IHRVG) the chain is Extracellular. Residues 1130–1159 (PIHGIYIHVFVFLGCMIGLTLFVGVVIANF) traverse the membrane as a helical segment. The Cytoplasmic segment spans residues 1160-1210 (NENKGTALLTVDQRRWEDLKSRLKIAQPLHLPPRPDNDGFRAKMYDITQHP). A helical transmembrane segment spans residues 1211-1227 (FFKRTIALLVLAQSVLL). Over 1228–1236 (SVKWDVEDP) the chain is Extracellular. A helical membrane pass occupies residues 1237–1260 (VTVPLATMSVVFTFIFVLEVTMKI). Over 1261–1271 (IAMSPAGFWQS) the chain is Cytoplasmic. A helical transmembrane segment spans residues 1272-1293 (RRNRYDLLVTSLGVVWVVLHFA). Topologically, residues 1294 to 1296 (LLN) are extracellular. The chain crosses the membrane as a helical; Voltage-sensor span at residues 1297 to 1318 (AYTYMMGACVIVFRFFSICGKH). Residues 1319 to 1331 (VTLKMLLLTVVVS) lie on the Cytoplasmic side of the membrane. Residues 1332–1357 (MYKSFFIIVGMFLLLLCYAFAGVVLF) form a helical membrane-spanning segment. The Extracellular portion of the chain corresponds to 1358 to 1378 (GTVKYGENINRHANFSSAGKA). An intramembrane region (pore-forming) is located at residues 1379 to 1398 (ITVLFRIVTGEDWNKIMHDC). The Extracellular portion of the chain corresponds to 1399-1420 (MVQPPFCTPDEFTYWATDCGNY). Residues Cys1405 and Cys1417 are joined by a disulfide bond. The chain crosses the membrane as a helical span at residues 1421-1447 (AGALMYFCSFYVIIAYIMLNLLVAIIV). The Cytoplasmic segment spans residues 1448–1738 (ENFSLFYSTE…DESGDDLLDI (291 aa)). The segment at 1611–1679 (PPSIETTQPS…WRLPSAPKPI (69 aa)) is disordered. Residues 1613-1631 (SIETTQPSEDTNANSQDHN) show a composition bias toward polar residues. A compositionally biased stretch (low complexity) spans 1633 to 1648 (QPESSSQQQLLSPTLS).

Belongs to the NALCN family. In terms of assembly, found in a complex with NALCN, UNC79, UNC80 and NACL1; these auxiliary subunits are indispensable for the function of NALCN channel. Interacts with UNC80; required for the NALCN activation/inhibition by GPCRs in neurons. Found in a complex with NALCN, UNC79 and UNC80; UNC80 bridges NALCN to UNC79. Interacts with CHRM3. Phosphorylated on tyrosine residues. In terms of tissue distribution, predominantly expressed in the brain, moderately in the heart and weakly in the pancreas.

The protein resides in the cell membrane. The catalysed reaction is Na(+)(in) = Na(+)(out). Inhibited by low micromolar concentrations of Gd(3+) and high micromolar concentrations of verapamil. Insensitive to tetrodotoxin (TTX) and potentiated by low external Ca(2+) concentration. Voltage-gated ion channel responsible for the resting Na(+) permeability that controls neuronal excitability. NALCN channel functions as a multi-protein complex, which consists at least of NALCN, NALF1, UNC79 and UNC80. NALCN is the voltage-sensing, pore-forming subunit of the NALCN channel complex. NALCN channel complex is constitutively active and conducts monovalent cations but is blocked by physiological concentrations of extracellular divalent cations. In addition to its role in regulating neuronal excitability, is required for normal respiratory rhythm, systemic osmoregulation by controlling the serum sodium concentration and in the regulation of the intestinal pace-making activity in the interstitial cells of Cajal. NALCN channel is also activated by neuropeptides such as neurotensin and substance P (SP) through a SRC family kinases-dependent pathway. In addition, NALCN activity is enhanced/modulated by several GPCRs, such as CHRM3. The chain is Sodium leak channel NALCN (Nalcn) from Rattus norvegicus (Rat).